Consider the following 225-residue polypeptide: Ribonuclease HII (225 aa).

The RNase H type-2 domain occupies aspartate 28–glutamate 220. A divalent metal cation is bound by residues aspartate 34, glutamate 35, and aspartate 129.

This sequence belongs to the RNase HII family. The cofactor is Mn(2+). It depends on Mg(2+) as a cofactor.

It is found in the cytoplasm. It carries out the reaction Endonucleolytic cleavage to 5'-phosphomonoester.. Functionally, endonuclease that specifically degrades the RNA of RNA-DNA hybrids. The polypeptide is Ribonuclease HII (Desulfotalea psychrophila (strain LSv54 / DSM 12343)).